A 211-amino-acid polypeptide reads, in one-letter code: Endonuclease III (211 aa).

Residues 108–127 (REALEALAGVGRKTANVVLN) form the HhH domain. Residues C187, C194, C197, and C203 each contribute to the [4Fe-4S] cluster site.

This sequence belongs to the Nth/MutY family. [4Fe-4S] cluster is required as a cofactor.

It catalyses the reaction 2'-deoxyribonucleotide-(2'-deoxyribose 5'-phosphate)-2'-deoxyribonucleotide-DNA = a 3'-end 2'-deoxyribonucleotide-(2,3-dehydro-2,3-deoxyribose 5'-phosphate)-DNA + a 5'-end 5'-phospho-2'-deoxyribonucleoside-DNA + H(+). Its function is as follows. DNA repair enzyme that has both DNA N-glycosylase activity and AP-lyase activity. The DNA N-glycosylase activity releases various damaged pyrimidines from DNA by cleaving the N-glycosidic bond, leaving an AP (apurinic/apyrimidinic) site. The AP-lyase activity cleaves the phosphodiester bond 3' to the AP site by a beta-elimination, leaving a 3'-terminal unsaturated sugar and a product with a terminal 5'-phosphate. This is Endonuclease III from Haemophilus influenzae (strain ATCC 51907 / DSM 11121 / KW20 / Rd).